A 1450-amino-acid chain; its full sequence is Phospholipase B1, membrane-associated (1450 aa).

Residues Met-1 to Gly-27 form the signal peptide. Residues Ser-28–Tyr-1422 are Extracellular-facing. Residues Asn-32, Asn-45, and Asn-179 are each glycosylated (N-linked (GlcNAc...) asparagine). Repeat copies occupy residues Arg-41 to Ser-351, Met-366 to Ser-711, and Asn-712 to Ser-1058. The tract at residues Arg-41–Ser-1407 is 4 X 308-326 AA approximate repeats. Active-site residues include Ser-404, Asp-518, and His-659. A glycan (N-linked (GlcNAc...) asparagine) is linked at Asn-699. Positions Thr-708 to Ser-720 are enriched in polar residues. The interval Thr-708–Val-734 is disordered. Asn-787, Asn-801, Asn-844, Asn-880, Asn-926, Asn-1059, Asn-1226, Asn-1280, Asn-1383, and Asn-1387 each carry an N-linked (GlcNAc...) asparagine glycan. Residues Ile-1068–Ser-1407 form repeat 4. Positions Gln-1408 to Gln-1450 are necessary for membrane localization. The helical transmembrane segment at Trp-1423–Trp-1443 threads the bilayer. At Arg-1444 to Gln-1450 the chain is on the cytoplasmic side.

Belongs to the 'GDSL' lipolytic enzyme family. Phospholipase B1 subfamily. Undergoes proteolytic cleavage in the ileum. Expressed in the ileum mucosa, Paneth cells spermatocytes, spermatids and sperm (at protein level). Expressed in the ileum, jejunum, esophagus and testis.

Its subcellular location is the apical cell membrane. The enzyme catalyses a 1,2-diacyl-sn-glycero-3-phosphocholine + H2O = a 1-acyl-sn-glycero-3-phosphocholine + a fatty acid + H(+). The catalysed reaction is a 1-O-alkyl-2-acyl-sn-glycero-3-phosphocholine + H2O = a 1-O-alkyl-sn-glycero-3-phosphocholine + a fatty acid + H(+). It carries out the reaction a 1-acyl-sn-glycero-3-phosphocholine + H2O = sn-glycerol 3-phosphocholine + a fatty acid + H(+). It catalyses the reaction a triacylglycerol + H2O = a diacylglycerol + a fatty acid + H(+). The enzyme catalyses 1,2-dihexadecanoyl-sn-glycero-3-phosphocholine + H2O = 1-hexadecanoyl-sn-glycero-3-phosphocholine + hexadecanoate + H(+). The catalysed reaction is 1-hexadecanoyl-2-(9Z-octadecenoyl)-sn-glycero-3-phosphocholine + H2O = 1-hexadecanoyl-sn-glycero-3-phosphocholine + (9Z)-octadecenoate + H(+). It carries out the reaction 1,2-di-(9Z-octadecenoyl)-sn-glycero-3-phosphocholine + H2O = 1-(9Z-octadecenoyl)-sn-glycero-3-phosphocholine + (9Z)-octadecenoate + H(+). It catalyses the reaction 1-hexadecanoyl-2-(9Z,12Z-octadecadienoyl)-sn-glycero-3-phosphocholine + H2O = (9Z,12Z)-octadecadienoate + 1-hexadecanoyl-sn-glycero-3-phosphocholine + H(+). The enzyme catalyses 1-hexadecanoyl-2-(9Z,12Z-octadecadienoyl)-sn-glycero-3-phosphocholine + H2O = 2-(9Z,12Z-octadecadienoyl)-sn-glycero-3-phosphocholine + hexadecanoate + H(+). The catalysed reaction is 1-hexadecanoyl-2-(9Z-octadecenoyl)-sn-glycero-3-phosphoethanolamine + H2O = 1-hexadecanoyl-sn-glycero-3-phosphoethanolamine + (9Z)-octadecenoate + H(+). It carries out the reaction 1-hexadecanoyl-2-(9Z-octadecenoyl)-sn-glycero-3-phospho-(1'-sn-glycerol) + H2O = 1-hexadecanoyl-sn-glycero-3-phospho-(1'-sn-glycerol) + (9Z)-octadecenoate + H(+). It catalyses the reaction 1,2-dihexadecanoyl-sn-glycero-3-phosphocholine + 2 H2O = sn-glycerol 3-phosphocholine + 2 hexadecanoate + 2 H(+). The enzyme catalyses 1-O-hexadecyl-2-(9Z)-octadecenoyl-sn-glycero-3-phosphocholine + H2O = 1-O-hexadecyl-sn-glycero-3-phosphocholine + (9Z)-octadecenoate + H(+). The catalysed reaction is 1-hexadecanoyl-sn-glycero-3-phosphocholine + H2O = sn-glycerol 3-phosphocholine + hexadecanoate + H(+). It carries out the reaction 1,2,3-tri-(9Z-octadecenoyl)-glycerol + H2O = di-(9Z)-octadecenoylglycerol + (9Z)-octadecenoate + H(+). It catalyses the reaction 1-hexadecanoyl-2-(9Z)-octadecenoyl-3-octadecanoyl-sn-glycerol + H2O = 1-hexadecanoyl-2-(9Z-octadecenoyl)-sn-glycerol + octadecanoate + H(+). The enzyme catalyses 1,3-dihexadecanoyl-2-(9Z-octadecenoyl)glycerol + H2O = 1,3-dihexadecanoylglycerol + (9Z)-octadecenoate + H(+). The catalysed reaction is 1,3-dihexadecanoyl-2-(9Z-octadecenoyl)glycerol + H2O = 1-hexadecanoyl-2-(9Z-octadecenoyl)-glycerol + hexadecanoate + H(+). It carries out the reaction 1-hexadecanoyl-2-(9Z)-octadecenoyl-3-octadecanoyl-sn-glycerol + H2O = 1-hexadecanoyl-3-octadecanoyl-sn-glycerol + (9Z)-octadecenoate + H(+). It catalyses the reaction 1-hexadecanoyl-2-(9Z)-octadecenoyl-3-octadecanoyl-sn-glycerol + H2O = 2-(9Z-octadecenoyl)-3-octadecanoyl-sn-glycerol + hexadecanoate + H(+). The enzyme catalyses 1-octadecanoyl-2-(9Z,12Z)-octadecadienoyl-sn-glycerol + H2O = 1-octadecanoyl-sn-glycerol + (9Z,12Z)-octadecadienoate + H(+). The catalysed reaction is 1,2-di-(9Z-octadecenoyl)-sn-glycerol + H2O = 1-(9Z-octadecenoyl)-sn-glycerol + (9Z)-octadecenoate + H(+). It carries out the reaction 2,3-di-(9Z)-octadecenoyl-sn-glycerol + H2O = 3-(9Z-octadecenoyl)-sn-glycerol + (9Z)-octadecenoate + H(+). It catalyses the reaction 1,3-di-(9Z-octadecenoyl)-glycerol + H2O = 1-(9Z-octadecenoyl)-glycerol + (9Z)-octadecenoate + H(+). The enzyme catalyses 1-(9Z-octadecenoyl)-glycerol + H2O = glycerol + (9Z)-octadecenoate + H(+). The catalysed reaction is 2-(9Z-octadecenoyl)-glycerol + H2O = glycerol + (9Z)-octadecenoate + H(+). Up-regulated by bile acids such as deoxycholate. Inhibited by diisopropyl fluorophosphate. Calcium-independent membrane-associated phospholipase that catalyzes complete diacylation of phospholipids by hydrolyzing both sn-1 and sn-2 fatty acyl chains attached to the glycerol backbone (phospholipase B activity). Has dual phospholipase and lysophospholipase activities toward diacylphospholipids. Preferentially cleaves sn-2 ester bonds over sn-1 bonds. Acts as a lipase toward glycerolipid substrates. Hydrolyzes fatty acyl chains of diacylglycerols with preference for the sn-2 position and of triacylglycerols with not positional selectivity. May also hydrolyze long chain retinyl esters such as retinyl palmitate. May contribute to digestion of dietary phospholipids, glycerolipids and retinoids, facilitating lipid absorption at the brush border. The sequence is that of Phospholipase B1, membrane-associated (Plb1) from Rattus norvegicus (Rat).